The following is a 631-amino-acid chain: tRNA uridine 5-carboxymethylaminomethyl modification enzyme MnmG (631 aa).

FAD contacts are provided by residues 15–20 (GGGHAG), Val127, and Ser182. 275–289 (GPRYCPSIEDKIVRF) contributes to the NAD(+) binding site. Residue Gln372 coordinates FAD.

It belongs to the MnmG family. Homodimer. Heterotetramer of two MnmE and two MnmG subunits. FAD serves as cofactor.

It localises to the cytoplasm. Its function is as follows. NAD-binding protein involved in the addition of a carboxymethylaminomethyl (cmnm) group at the wobble position (U34) of certain tRNAs, forming tRNA-cmnm(5)s(2)U34. The sequence is that of tRNA uridine 5-carboxymethylaminomethyl modification enzyme MnmG from Buchnera aphidicola subsp. Schizaphis graminum (strain Sg).